A 1029-amino-acid polypeptide reads, in one-letter code: Tyrosine-protein kinase-like otk (1029 aa).

The signal sequence occupies residues 1-18 (MISIYGLVMALMMASVLA). The Extracellular segment spans residues 19–577 (SSSRFQRVPQ…GGDGFLVTRA (559 aa)). Ig-like C2-type domains follow at residues 21-104 (SRFQ…REAS), 105-195 (PPAK…RVMS), 247-361 (PEDL…APIS), 364-459 (PGIL…VAIN), and 464-554 (PKFS…VQLV). Residue N35 is glycosylated (N-linked (GlcNAc...) asparagine). Cystine bridges form between C42–C91, C133–C184, C272–C350, and C395–C443. N-linked (GlcNAc...) asparagine glycans are attached at residues N332, N413, N425, N440, N453, N508, and N520. C486 and C538 are joined by a disulfide. The helical transmembrane segment at 578-598 (VLITMTVALAYIVLVVGLMLW) threads the bilayer. Residues 599–1029 (CRYRRQARKA…LSKAMQIAEK (431 aa)) lie on the Cytoplasmic side of the membrane. 2 disordered regions span residues 613-675 (LSTK…KKSA) and 714-756 (SPSD…KTSM). The span at 651-669 (KSSGDAQKSDDTACSQQSR) shows a compositional bias: polar residues. S674 is subject to Phosphoserine. The Protein kinase; inactive domain occupies 688–1024 (LSELIQIGRG…QLGAALSKAM (337 aa)). The span at 716-727 (SDKDADTEKQHS) shows a compositional bias: basic and acidic residues.

It belongs to the protein kinase superfamily. Tyr protein kinase family. Insulin receptor subfamily. Interacts with plexA; component of a receptor complex that mediates the repulsive signaling in response to Semaphorin ligands.

The protein resides in the cell membrane. Its function is as follows. Acts as a calcium-dependent, homophilic cell adhesion molecule that regulates neural recognition during the development of the nervous system. Component of the repulsive Plexin signaling response to regulate motor axon guidance at the embryonic stage. Also component of a receptor complex that is required in the adult visual system to innervate the lamina layer; specific targeting of R1-R6 axons. The polypeptide is Tyrosine-protein kinase-like otk (Drosophila sechellia (Fruit fly)).